The following is a 159-amino-acid chain: Eukaryotic translation initiation factor 5A-2 (159 aa).

The span at 1–10 (MSDEEHHFEP) shows a compositional bias: basic and acidic residues. Residues 1–21 (MSDEEHHFEPAADAGASKTYP) form a disordered region. At lysine 52 the chain carries Hypusine.

It belongs to the eIF-5A family. Post-translationally, lys-52 undergoes hypusination, a unique post-translational modification that consists in the addition of a butylamino group from spermidine to lysine side chain, leading to the formation of the unusual amino acid hypusine. eIF-5As are the only known proteins to undergo this modification, which is essential for their function.

In terms of biological role, translation factor that promotes translation elongation and termination, particularly upon ribosome stalling at specific amino acid sequence contexts. Binds between the exit (E) and peptidyl (P) site of the ribosome and promotes rescue of stalled ribosome: specifically required for efficient translation of polyproline-containing peptides as well as other motifs that stall the ribosome. Acts as a ribosome quality control (RQC) cofactor by joining the RQC complex to facilitate peptidyl transfer during CAT tailing step. The chain is Eukaryotic translation initiation factor 5A-2 from Medicago sativa (Alfalfa).